Consider the following 360-residue polypeptide: S-adenosylmethionine decarboxylase proenzyme (360 aa).

Catalysis depends on residues Glu13 and Glu16. The active-site Schiff-base intermediate with substrate; via pyruvic acid is Ser73. At Ser73 the chain carries Pyruvic acid (Ser); by autocatalysis. Residue Cys87 is the Proton donor; for catalytic activity of the active site. Residues Ser236 and His249 each act as proton acceptor; for processing activity in the active site.

Belongs to the eukaryotic AdoMetDC family. Pyruvate is required as a cofactor. Is synthesized initially as an inactive proenzyme. Formation of the active enzyme involves a self-maturation process in which the active site pyruvoyl group is generated from an internal serine residue via an autocatalytic post-translational modification. Two non-identical subunits are generated from the proenzyme in this reaction, and the pyruvate is formed at the N-terminus of the alpha chain, which is derived from the carboxyl end of the proenzyme. The post-translation cleavage follows an unusual pathway, termed non-hydrolytic serinolysis, in which the side chain hydroxyl group of the serine supplies its oxygen atom to form the C-terminus of the beta chain, while the remainder of the serine residue undergoes an oxidative deamination to produce ammonia and the pyruvoyl group blocking the N-terminus of the alpha chain. In terms of tissue distribution, stolon, also expressed in leaves, stems and roots.

It catalyses the reaction S-adenosyl-L-methionine + H(+) = S-adenosyl 3-(methylsulfanyl)propylamine + CO2. The protein operates within amine and polyamine biosynthesis; S-adenosylmethioninamine biosynthesis; S-adenosylmethioninamine from S-adenosyl-L-methionine: step 1/1. This is S-adenosylmethionine decarboxylase proenzyme (SAMDC) from Solanum tuberosum (Potato).